The chain runs to 112 residues: Toxin-like structure LSTX-D10 (112 aa).

The N-terminal stretch at 1-20 (MMKVLVVVALLVTLISYSSS) is a signal peptide. Positions 21–41 (EGIDDLEADELLSLMANEQTR) are excised as a propeptide. 4 disulfide bridges follow: Cys-45/Cys-60, Cys-52/Cys-69, Cys-59/Cys-84, and Cys-71/Cys-82.

The protein belongs to the neurotoxin 19 (CSTX) family. 01 subfamily. In terms of tissue distribution, expressed by the venom gland.

The protein resides in the secreted. The sequence is that of Toxin-like structure LSTX-D10 from Lycosa singoriensis (Wolf spider).